The primary structure comprises 110 residues: Large ribosomal subunit protein uL22 (110 aa).

Belongs to the universal ribosomal protein uL22 family. As to quaternary structure, part of the 50S ribosomal subunit.

Functionally, this protein binds specifically to 23S rRNA; its binding is stimulated by other ribosomal proteins, e.g. L4, L17, and L20. It is important during the early stages of 50S assembly. It makes multiple contacts with different domains of the 23S rRNA in the assembled 50S subunit and ribosome. Its function is as follows. The globular domain of the protein is located near the polypeptide exit tunnel on the outside of the subunit, while an extended beta-hairpin is found that lines the wall of the exit tunnel in the center of the 70S ribosome. The sequence is that of Large ribosomal subunit protein uL22 from Enterobacter sp. (strain 638).